The chain runs to 327 residues: Transaldolase (327 aa).

K132 functions as the Schiff-base intermediate with substrate in the catalytic mechanism.

Belongs to the transaldolase family. Type 1 subfamily.

Its subcellular location is the cytoplasm. The catalysed reaction is D-sedoheptulose 7-phosphate + D-glyceraldehyde 3-phosphate = D-erythrose 4-phosphate + beta-D-fructose 6-phosphate. It participates in carbohydrate degradation; pentose phosphate pathway; D-glyceraldehyde 3-phosphate and beta-D-fructose 6-phosphate from D-ribose 5-phosphate and D-xylulose 5-phosphate (non-oxidative stage): step 2/3. In terms of biological role, transaldolase is important for the balance of metabolites in the pentose-phosphate pathway. The chain is Transaldolase from Chlamydia muridarum (strain MoPn / Nigg).